Here is a 652-residue protein sequence, read N- to C-terminus: Interferon-induced GTP-binding protein Mx1 (652 aa).

Residues 1–27 form a disordered region; that stretch reads MKERTSACRHGTPQKHPDTSEESQAME. In terms of domain architecture, Dynamin-type G spans 58–331; that stretch reads DLALPAIAVI…LTSHICKSLP (274 aa). Residues 68–75 are G1 motif; the sequence is GDQSSGKS. 68 to 75 contacts GTP; it reads GDQSSGKS. The interval 93–95 is G2 motif; sequence VTR. The segment at 169–172 is G3 motif; the sequence is DLPG. GTP is bound by residues 169–173 and 238–241; these read DLPGI and TKPD. The segment at 238 to 241 is G4 motif; that stretch reads TKPD. A G5 motif region spans residues 270 to 273; sequence KCRG. The interval 332-357 is bundle signaling element (BSE); that stretch reads ILENQINVNHQIASEELQKYGADIPE. The middle domain stretch occupies residues 357 to 526; sequence EDDSKRLSFL…HFQMEHIVYC (170 aa). A stalk region spans residues 358–622; it reads DDSKRLSFLM…TSKCNWFLTE (265 aa). A GED domain is found at 564–652; the sequence is TTEMTQHLNA…AQRKLAKFSN (89 aa).

It belongs to the TRAFAC class dynamin-like GTPase superfamily. Dynamin/Fzo/YdjA family. Homooligomer. Oligomerizes into multimeric filamentous or ring-like structures by virtue of its stalk domain. Oligomerization is critical for GTPase activity, protein stability, and recognition of viral target structures. Interacts with TRPC1, TRPC3, TRPC4, TRPC5, TRPC6 and TRPC7. Interacts with HSPA5. Interacts with TUBB/TUBB5. Interacts with DDX39A and DDX39B. ISGylated.

It is found in the nucleus. The protein resides in the cytoplasm. The protein localises to the endoplasmic reticulum membrane. It localises to the perinuclear region. Functionally, interferon-induced dynamin-like GTPase which has antiviral activity against influenza A virus, (IAV) and Thogoto virus (THOV). Inhibits IAV by interfering with the process of primary transcription, probably by affecting the viral polymerase function. The protein is Interferon-induced GTP-binding protein Mx1 (Mx1) of Rattus norvegicus (Rat).